We begin with the raw amino-acid sequence, 330 residues long: D-lactate dehydrogenase (330 aa).

NAD(+)-binding positions include arginine 156–isoleucine 157, aspartate 176, valine 206–proline 207, alanine 233–arginine 235, and aspartate 259. Arginine 235 is a catalytic residue. The active site involves glutamate 264. Histidine 296 (proton donor) is an active-site residue.

It belongs to the D-isomer specific 2-hydroxyacid dehydrogenase family.

The enzyme catalyses (R)-lactate + NAD(+) = pyruvate + NADH + H(+). In Staphylococcus aureus, this protein is D-lactate dehydrogenase (ldhD).